The primary structure comprises 295 residues: UDP-N-acetylenolpyruvoylglucosamine reductase (295 aa).

One can recognise an FAD-binding PCMH-type domain in the interval 25-189; the sequence is RVGGPADLFA…LEALFRLDQR (165 aa). Residue arginine 169 is part of the active site. Residue serine 218 is the Proton donor of the active site. Residue glutamate 288 is part of the active site.

This sequence belongs to the MurB family. Requires FAD as cofactor.

Its subcellular location is the cytoplasm. The enzyme catalyses UDP-N-acetyl-alpha-D-muramate + NADP(+) = UDP-N-acetyl-3-O-(1-carboxyvinyl)-alpha-D-glucosamine + NADPH + H(+). The protein operates within cell wall biogenesis; peptidoglycan biosynthesis. Cell wall formation. This Pelobacter propionicus (strain DSM 2379 / NBRC 103807 / OttBd1) protein is UDP-N-acetylenolpyruvoylglucosamine reductase.